Reading from the N-terminus, the 472-residue chain is Mixed lineage kinase domain-like protein (472 aa).

The N-terminal bundle and brace (NBB); mediates INSP6 binding stretch occupies residues 1 to 143 (MDKLGQIIKL…QEDRQDAEED (143 aa)). The stretch at 61-81 (LGRFDEVLKEANQQIEKFSKK) forms a coiled coil. Ser-124 carries the phosphoserine modification. Residues 138 to 229 (QDAEEDGNEN…VFNNPQAESV (92 aa)) adopt a coiled-coil conformation. The Protein kinase domain maps to 192–456 (GPPWTKLKTS…DGRSLSGRER (265 aa)). ATP-binding positions include 198–206 (LKTSKMSTI) and Lys-219. Residues Ser-345 and Ser-347 each carry the phosphoserine; by RIPK3 modification. Thr-349 carries the post-translational modification Phosphothreonine; by RIPK3. Position 352 is a phosphoserine; by RIPK3 (Ser-352).

Belongs to the protein kinase superfamily. As to quaternary structure, homooligomer. Homotrimer; forms homotrimers on necroptosis induction. Upon TNF-induced necrosis, forms in complex with PGAM5, RIPK1 and RIPK3. Within this complex, may play a role in the proper targeting of RIPK1-RIPK3 to its downstream effector PGAM5. Interacts with RIPK3; the interaction is direct and promotes its phosphorylation and subsequent activation. Phosphorylation by RIPK3 induces a conformational switch that is required for necroptosis. It also induces homotrimerization and localization to the plasma membrane. In terms of tissue distribution, highly expressed in thymus, colon, intestine, liver, spleen and lung. Expressed at much lower level in skeletal muscle, heart and kidney. Not detected in brain.

It is found in the cytoplasm. It localises to the cell membrane. The protein resides in the nucleus. Its activity is regulated as follows. Activated via binding to highly phosphorylated inositol phosphates such as inositolhexakisphosphate (InsP6) which mediates the release of an N-terminal auto-inhibitory region. Activation requires not only RIPK3-dependent phosphorylation but also binding to highly phosphorylated inositol phosphates. In terms of biological role, pseudokinase that plays a key role in TNF-induced necroptosis, a programmed cell death process. Does not have protein kinase activity. Activated following phosphorylation by RIPK3, leading to homotrimerization, localization to the plasma membrane and execution of programmed necrosis characterized by calcium influx and plasma membrane damage. In addition to TNF-induced necroptosis, necroptosis can also take place in the nucleus in response to orthomyxoviruses infection: following ZBP1 activation, which senses double-stranded Z-RNA structures, nuclear RIPK3 catalyzes phosphorylation and activation of MLKL, promoting disruption of the nuclear envelope and leakage of cellular DNA into the cytosol. Binds to highly phosphorylated inositol phosphates such as inositolhexakisphosphate (InsP6) which is essential for its necroptotic function. The protein is Mixed lineage kinase domain-like protein of Mus musculus (Mouse).